We begin with the raw amino-acid sequence, 427 residues long: Tol-Pal system protein TolB (427 aa).

The first 27 residues, 1 to 27, serve as a signal peptide directing secretion; it reads MPVSLLRALLVFSLLCLGLSATRAAHA.

Belongs to the TolB family. The Tol-Pal system is composed of five core proteins: the inner membrane proteins TolA, TolQ and TolR, the periplasmic protein TolB and the outer membrane protein Pal. They form a network linking the inner and outer membranes and the peptidoglycan layer.

The protein localises to the periplasm. Functionally, part of the Tol-Pal system, which plays a role in outer membrane invagination during cell division and is important for maintaining outer membrane integrity. The polypeptide is Tol-Pal system protein TolB (Thiobacillus denitrificans (strain ATCC 25259 / T1)).